We begin with the raw amino-acid sequence, 245 residues long: 2,3-bisphosphoglycerate-dependent phosphoglycerate mutase (245 aa).

Residues 8-15 (RHGQSLWN), 21-22 (TG), Arg60, 87-90 (ERHY), Lys98, 114-115 (RR), and 183-184 (GN) contribute to the substrate site. Residue His9 is the Tele-phosphohistidine intermediate of the active site. Catalysis depends on Glu87, which acts as the Proton donor/acceptor.

The protein belongs to the phosphoglycerate mutase family. BPG-dependent PGAM subfamily.

The enzyme catalyses (2R)-2-phosphoglycerate = (2R)-3-phosphoglycerate. It participates in carbohydrate degradation; glycolysis; pyruvate from D-glyceraldehyde 3-phosphate: step 3/5. Its function is as follows. Catalyzes the interconversion of 2-phosphoglycerate and 3-phosphoglycerate. The chain is 2,3-bisphosphoglycerate-dependent phosphoglycerate mutase from Bacillus mycoides (strain KBAB4) (Bacillus weihenstephanensis).